The following is a 493-amino-acid chain: MRRRRAAVAAGFCASFLLGSVLNVLFAPGSEPPRPGQSPEPSPAPGPGRRGGRGELARQIRARYEEVQRYSRGGPGPGAGRPERRRLMDLAPGGPGLPRPRPPWARPLSDGAPGWPPAPGPGSPGPGPRLGCAALRNVSGAQYMGSGYTKAVYRVRLPGGAAVALKAVDFSGHDLGSCVREFGVRRGCYRLAAHKLLKEMVLLERLRHPNVLQLYGYCYQDSEDIPDTLTTITELGAPVEMIQLLQTSWEDRFRICLSLGRLLHHLAHSPLGSVTLLDFRPRQFVLVDGELKVTDLDDARVEETPCAGSTDCILEFPARNFTLPCSAQGWCEGMNEKRNLYNAYRFFFTYLLPHSAPPSLRPLLDSIVNATGELAWGVDETLAQLEKVLHLYRSGQYLQNSTASSSTEYQCIPDSTIPQEDYRCWPSYHHGSCLLSVFNLAEAVDVCESHAQCRAFVVTNQTTWTGRQLVFFKTGWSQVVPDPNKTTYVKASG.

Residues 1-32 (MRRRRAAVAAGFCASFLLGSVLNVLFAPGSEP) form the signal peptide. The disordered stretch occupies residues 28–128 (PGSEPPRPGQ…PGPGSPGPGP (101 aa)). The span at 30-46 (SEPPRPGQSPEPSPAPG) shows a compositional bias: pro residues. Residues 52–69 (GRGELARQIRARYEEVQR) are compositionally biased toward basic and acidic residues. Pro residues-rich tracts occupy residues 95-105 (PGLPRPRPPWA) and 114-127 (GWPP…PGPG). Residue Asn-137 is glycosylated (N-linked (GlcNAc...) asparagine). The Protein kinase domain occupies 138 to 493 (VSGAQYMGSG…NKTTYVKASG (356 aa)). ATP-binding positions include 144–152 (MGSGYTKAV) and Lys-166. Phosphotyrosine is present on Tyr-148. Ser-177 is modified (phosphoserine). The Proton acceptor role is filled by Asp-278. Asn-320, Asn-369, Asn-400, Asn-460, and Asn-484 each carry an N-linked (GlcNAc...) asparagine glycan.

It belongs to the protein kinase superfamily. Post-translationally, N-glycosylated. Phosphorylated on tyrosines; probably via autophosphorylation. As to expression, highly expressed in platelets.

It localises to the secreted. The protein resides in the golgi apparatus. It carries out the reaction L-tyrosyl-[protein] + ATP = O-phospho-L-tyrosyl-[protein] + ADP + H(+). In terms of biological role, secreted tyrosine-protein kinase that mediates phosphorylation of extracellular proteins and endogenous proteins in the secretory pathway, which is essential for patterning at organogenesis stages. Mediates phosphorylation of MMP1, MMP13, MMP14, MMP19 and ERP29. Probably plays a role in platelets: rapidly and quantitatively secreted from platelets in response to stimulation of platelet degranulation. May also have serine/threonine protein kinase activity. Required for longitudinal bone growth through regulation of chondrocyte differentiation. May be indirectly involved in protein transport from the Golgi apparatus to the plasma membrane. This Homo sapiens (Human) protein is Extracellular tyrosine-protein kinase PKDCC.